Here is a 364-residue protein sequence, read N- to C-terminus: Palmitoyltransferase ZDHHC9 (364 aa).

The Cytoplasmic portion of the chain corresponds to 1-35; sequence MSVMVVRKKVTRKWEKLPGRNTFCCDGRVMMARQK. Residues 36–56 form a helical membrane-spanning segment; that stretch reads GIFYLTLFLILGTCTLFFAFE. Residues 57–63 are Lumenal-facing; the sequence is CRYLAVQ. A helical membrane pass occupies residues 64 to 84; that stretch reads LSPAIPVFAAMLFLFSMATLL. The Cytoplasmic portion of the chain corresponds to 85–183; the sequence is RTSFSDPGVI…NCVGKRNYRY (99 aa). Residues 139 to 189 form the DHHC domain; it reads KYCYTCKIFRPPRASHCSICDNCVERFDHHCPWVGNCVGKRNYRYFYLFIL. The active-site S-palmitoyl cysteine intermediate is C169. A helical transmembrane segment spans residues 184–204; it reads FYLFILSLSLLTIYVFAFNIV. The Lumenal segment spans residues 205–228; sequence YVALKSLKIGFLETLKETPGTVLE. Residues 229–249 form a helical membrane-spanning segment; sequence VLICFFTLWSVVGLTGFHTFL. Topologically, residues 250–364 are cytoplasmic; it reads VALNQTTNED…PPQEAAEAEK (115 aa). The interval 303–364 is disordered; that stretch reads PLEESGSRPP…PPQEAAEAEK (62 aa). Polar residues predominate over residues 310–323; the sequence is RPPSTQETSSSLLP. Over residues 346-356 the composition is skewed to pro residues; that stretch reads EMPPPEPPEPP.

This sequence belongs to the DHHC palmitoyltransferase family. ERF2/ZDHHC9 subfamily. Interacts with GOLGA7. Highly expressed in kidney, skeletal muscle, brain, lung and liver. Absent in thymus, spleen and leukocytes.

The protein localises to the endoplasmic reticulum membrane. It localises to the golgi apparatus membrane. It carries out the reaction L-cysteinyl-[protein] + hexadecanoyl-CoA = S-hexadecanoyl-L-cysteinyl-[protein] + CoA. Palmitoyltransferase that catalyzes the addition of palmitate onto various protein substrates, such as ADRB2, GSDMD, HRAS, NRAS and CGAS. The ZDHHC9-GOLGA7 complex is a palmitoyltransferase specific for HRAS and NRAS. May have a palmitoyltransferase activity toward the beta-2 adrenergic receptor/ADRB2 and therefore regulate G protein-coupled receptor signaling. Acts as a regulator of innate immunity by catalyzing palmitoylation of CGAS, thereby promoting CGAS homodimerization and cyclic GMP-AMP synthase activity. Activates pyroptosis by catalyzing palmitoylation of gasdermin-D (GSDMD), thereby promoting membrane translocation and pore formation of GSDMD. Functionally, (Microbial infection) Through a sequential action with ZDHHC20, rapidly and efficiently palmitoylates SARS coronavirus-2/SARS-CoV-2 spike protein following its synthesis in the endoplasmic reticulum (ER). In the infected cell, promotes spike biogenesis by protecting it from premature ER degradation, increases half-life and controls the lipid organization of its immediate membrane environment. Once the virus has formed, spike palmitoylation controls fusion with the target cell. The chain is Palmitoyltransferase ZDHHC9 from Homo sapiens (Human).